A 298-amino-acid chain; its full sequence is Probable aspartoacylase (298 aa).

The Zn(2+) site is built by His-13 and Glu-16. Substrate contacts are provided by residues Arg-54 and 61-62 (NR). His-103 is a Zn(2+) binding site. Positions 161 and 271 each coordinate substrate.

This sequence belongs to the AspA/AstE family. Aspartoacylase subfamily. The cofactor is Zn(2+).

The enzyme catalyses an N-acyl-L-aspartate + H2O = a carboxylate + L-aspartate. The protein is Probable aspartoacylase of Prochlorococcus marinus (strain MIT 9515).